The primary structure comprises 104 residues: Large ribosomal subunit protein bL21 (104 aa).

It belongs to the bacterial ribosomal protein bL21 family. Part of the 50S ribosomal subunit. Contacts protein L20.

This protein binds to 23S rRNA in the presence of protein L20. The protein is Large ribosomal subunit protein bL21 of Tropheryma whipplei (strain Twist) (Whipple's bacillus).